Consider the following 453-residue polypeptide: CCA-adding enzyme (453 aa).

2 residues coordinate ATP: Ser53 and Lys56. CTP-binding residues include Ser53 and Lys56. Asp65, Asp67, and Asp119 together coordinate Mg(2+). 3 residues coordinate ATP: His142, Lys161, and Tyr170. CTP contacts are provided by His142, Lys161, and Tyr170.

This sequence belongs to the tRNA nucleotidyltransferase/poly(A) polymerase family. Archaeal CCA-adding enzyme subfamily. In terms of assembly, homodimer. Mg(2+) is required as a cofactor.

It catalyses the reaction a tRNA precursor + 2 CTP + ATP = a tRNA with a 3' CCA end + 3 diphosphate. The catalysed reaction is a tRNA with a 3' CCA end + 2 CTP + ATP = a tRNA with a 3' CCACCA end + 3 diphosphate. Functionally, catalyzes the addition and repair of the essential 3'-terminal CCA sequence in tRNAs without using a nucleic acid template. Adds these three nucleotides in the order of C, C, and A to the tRNA nucleotide-73, using CTP and ATP as substrates and producing inorganic pyrophosphate. tRNA 3'-terminal CCA addition is required both for tRNA processing and repair. Also involved in tRNA surveillance by mediating tandem CCA addition to generate a CCACCA at the 3' terminus of unstable tRNAs. While stable tRNAs receive only 3'-terminal CCA, unstable tRNAs are marked with CCACCA and rapidly degraded. This is CCA-adding enzyme from Pyrococcus furiosus (strain ATCC 43587 / DSM 3638 / JCM 8422 / Vc1).